Reading from the N-terminus, the 394-residue chain is Tubby-like F-box protein 2 (394 aa).

Positions 21–44 are disordered; it reads SKRSWSKSSHIAPDQTTPPLDNIP. Over residues 26 to 44 the composition is skewed to polar residues; it reads SKSSHIAPDQTTPPLDNIP. In terms of domain architecture, F-box spans 46-101; sequence SPWASLPPELLHDIIWRVEESETAWPARAAVVSCASVCKSWRGITMEIVRIPEQCG. Disordered stretches follow at residues 200–225 and 268–297; these read ASST…PTNS and IEEE…PSLR.

The protein belongs to the TUB family. In terms of tissue distribution, ubiquitous.

The sequence is that of Tubby-like F-box protein 2 from Arabidopsis thaliana (Mouse-ear cress).